The sequence spans 179 residues: MAKLHDYYKSSVVAELTKEFSYTSVMQVPRIEKITLNMGVGEAINDKKLLENAASDMATISGQKPLITKARKSVAGFKIREGYPIGCKVTLRGERMWEFLERLISIALPRVRDFRGVSAKSFDGRGNYSMGVREQIIFPEIDYDKVDRVRGLDITITTSAGSDEEGRALLAAFNFPFRK.

This sequence belongs to the universal ribosomal protein uL5 family. As to quaternary structure, part of the 50S ribosomal subunit; part of the 5S rRNA/L5/L18/L25 subcomplex. Contacts the 5S rRNA and the P site tRNA. Forms a bridge to the 30S subunit in the 70S ribosome.

Its function is as follows. This is one of the proteins that bind and probably mediate the attachment of the 5S RNA into the large ribosomal subunit, where it forms part of the central protuberance. In the 70S ribosome it contacts protein S13 of the 30S subunit (bridge B1b), connecting the 2 subunits; this bridge is implicated in subunit movement. Contacts the P site tRNA; the 5S rRNA and some of its associated proteins might help stabilize positioning of ribosome-bound tRNAs. The sequence is that of Large ribosomal subunit protein uL5 from Vibrio atlanticus (strain LGP32) (Vibrio splendidus (strain Mel32)).